We begin with the raw amino-acid sequence, 310 residues long: HPr kinase/phosphorylase (310 aa).

Active-site residues include His-138 and Lys-159. An ATP-binding site is contributed by 153–160; the sequence is GDSGIGKS. Residue Ser-160 participates in Mg(2+) binding. Residue Asp-177 is the Proton acceptor; for phosphorylation activity. Proton donor; for dephosphorylation activity of the active site. Positions 201 to 210 are important for the catalytic mechanism of both phosphorylation and dephosphorylation; sequence LEIRGVGIID. Residue Glu-202 participates in Mg(2+) binding. Arg-243 is a catalytic residue. Residues 264–269 are important for the catalytic mechanism of dephosphorylation; that stretch reads PVKTGR.

Belongs to the HPrK/P family. In terms of assembly, homohexamer. The cofactor is Mg(2+).

The enzyme catalyses [HPr protein]-L-serine + ATP = [HPr protein]-O-phospho-L-serine + ADP + H(+). The catalysed reaction is [HPr protein]-O-phospho-L-serine + phosphate + H(+) = [HPr protein]-L-serine + diphosphate. Functionally, catalyzes the ATP- as well as the pyrophosphate-dependent phosphorylation of a specific serine residue in HPr, a phosphocarrier protein of the phosphoenolpyruvate-dependent sugar phosphotransferase system (PTS). HprK/P also catalyzes the pyrophosphate-producing, inorganic phosphate-dependent dephosphorylation (phosphorolysis) of seryl-phosphorylated HPr (P-Ser-HPr). The two antagonistic activities of HprK/P are regulated by several intracellular metabolites, which change their concentration in response to the absence or presence of rapidly metabolisable carbon sources (glucose, fructose, etc.) in the growth medium. Therefore, by controlling the phosphorylation state of HPr, HPrK/P is a sensor enzyme that plays a major role in the regulation of carbon metabolism and sugar transport: it mediates carbon catabolite repression (CCR), and regulates PTS-catalyzed carbohydrate uptake and inducer exclusion. The sequence is that of HPr kinase/phosphorylase (hprK) from Streptococcus pyogenes serotype M1.